We begin with the raw amino-acid sequence, 352 residues long: UDP-N-acetylglucosamine--N-acetylmuramyl-(pentapeptide) pyrophosphoryl-undecaprenol N-acetylglucosamine transferase (352 aa).

UDP-N-acetyl-alpha-D-glucosamine is bound by residues Ser195 and Gln287.

Belongs to the glycosyltransferase 28 family. MurG subfamily.

The protein localises to the cell membrane. The catalysed reaction is Mur2Ac(oyl-L-Ala-gamma-D-Glu-L-Lys-D-Ala-D-Ala)-di-trans,octa-cis-undecaprenyl diphosphate + UDP-N-acetyl-alpha-D-glucosamine = beta-D-GlcNAc-(1-&gt;4)-Mur2Ac(oyl-L-Ala-gamma-D-Glu-L-Lys-D-Ala-D-Ala)-di-trans,octa-cis-undecaprenyl diphosphate + UDP + H(+). Its pathway is cell wall biogenesis; peptidoglycan biosynthesis. Functionally, cell wall formation. Catalyzes the transfer of a GlcNAc subunit on undecaprenyl-pyrophosphoryl-MurNAc-pentapeptide (lipid intermediate I) to form undecaprenyl-pyrophosphoryl-MurNAc-(pentapeptide)GlcNAc (lipid intermediate II). This chain is UDP-N-acetylglucosamine--N-acetylmuramyl-(pentapeptide) pyrophosphoryl-undecaprenol N-acetylglucosamine transferase, found in Streptococcus pneumoniae (strain Taiwan19F-14).